The sequence spans 309 residues: Elongator complex protein 5 (309 aa).

S3 and S4 each carry phosphoserine.

This sequence belongs to the ELP5 family. In terms of assembly, component of the elongator complex, which consists of ELP1/IKI3, ELP2, ELP3, ELP4, ELP5/IKI1 and ELP6. The elongator complex is composed of two copies of the Elp123 subcomplex (composed of ELP1/IKI3, ELP2 and ELP3) and two copies of the Elp456 subcomplex (composed of ELP4, ELP5/IKI1 and ELP6). The Elp123 subcomplex forms a two-lobed scaffold, which binds the Elp456 subcomplex asymmetrically. In each lobe, ELP2 is tightly sandwiched between ELP1/IKI3 and ELP3. The Elp123 subcomplex binds tRNA through ELP1/IKI3 and ELP3 and can bind 2 tRNAs simultaneously. tRNA-binding by the Elp123 subcomplex induces conformational rearrangements which precisely position the targeted anticodon base in the active site. The Elp456 subcomplex binds tRNA and has ATPase activity. Interacts with KTI11/DPH3.

The protein resides in the cytoplasm. It localises to the nucleus. The protein operates within tRNA modification; 5-methoxycarbonylmethyl-2-thiouridine-tRNA biosynthesis. In terms of biological role, component of the elongator complex which is required for multiple tRNA modifications, including mcm5U (5-methoxycarbonylmethyl uridine), mcm5s2U (5-methoxycarbonylmethyl-2-thiouridine), and ncm5U (5-carbamoylmethyl uridine). The elongator complex catalyzes formation of carboxymethyluridine in the wobble base at position 34 in tRNAs. It functions as a gamma-toxin target (TOT); disruption of the complex confers resistance to Kluyveromyces lactis toxin zymocin (pGKL1 killer toxin). May also be involved in sensitivity to Pichia inositovora toxin. This is Elongator complex protein 5 (IKI1) from Saccharomyces cerevisiae (strain ATCC 204508 / S288c) (Baker's yeast).